The sequence spans 225 residues: Tryptophan synthase beta chain (225 aa).

This sequence belongs to the TrpB family. As to quaternary structure, tetramer of two alpha and two beta chains. The cofactor is pyridoxal 5'-phosphate.

The catalysed reaction is (1S,2R)-1-C-(indol-3-yl)glycerol 3-phosphate + L-serine = D-glyceraldehyde 3-phosphate + L-tryptophan + H2O. The protein operates within amino-acid biosynthesis; L-tryptophan biosynthesis; L-tryptophan from chorismate: step 5/5. In terms of biological role, the beta subunit is responsible for the synthesis of L-tryptophan from indole and L-serine. In Buchnera aphidicola subsp. Rhopalosiphum maidis, this protein is Tryptophan synthase beta chain (trpB).